Here is an 80-residue protein sequence, read N- to C-terminus: uncharacterized protein (80 aa).

A helical transmembrane segment spans residues 10 to 29 (FVAREYPLVVVPFIYFVLFL).

The protein resides in the membrane. This is an uncharacterized protein from Saccharomyces cerevisiae (strain ATCC 204508 / S288c) (Baker's yeast).